A 631-amino-acid polypeptide reads, in one-letter code: 1-deoxy-D-xylulose-5-phosphate synthase (631 aa).

Thiamine diphosphate is bound by residues His-87 and 128–130 (GHS). Asp-159 is a binding site for Mg(2+). Thiamine diphosphate contacts are provided by residues 160–161 (GA), Asn-188, Phe-295, and Glu-377. Mg(2+) is bound at residue Asn-188.

It belongs to the transketolase family. DXPS subfamily. In terms of assembly, homodimer. Mg(2+) is required as a cofactor. Requires thiamine diphosphate as cofactor.

It carries out the reaction D-glyceraldehyde 3-phosphate + pyruvate + H(+) = 1-deoxy-D-xylulose 5-phosphate + CO2. It functions in the pathway metabolic intermediate biosynthesis; 1-deoxy-D-xylulose 5-phosphate biosynthesis; 1-deoxy-D-xylulose 5-phosphate from D-glyceraldehyde 3-phosphate and pyruvate: step 1/1. Its function is as follows. Catalyzes the acyloin condensation reaction between C atoms 2 and 3 of pyruvate and glyceraldehyde 3-phosphate to yield 1-deoxy-D-xylulose-5-phosphate (DXP). This chain is 1-deoxy-D-xylulose-5-phosphate synthase, found in Pseudomonas putida (strain GB-1).